The chain runs to 441 residues: MSGSYDEASEEITDSFWEVGNYKRTVKRIDDGHRLCNDLMSCVQERAKIEKAYAQQLTDWAKRWRQLIEKGPQYGSLERAWGAMMTEADKVSELHQEVKNSLLNEDLEKVKNWQKDAYHKQIMGGFKETKEAEDGFRKAQKPWAKKMKELEAAKKAYHLACKEERLAMTREMNSKTEQSVTPEQQKKLVDKVDKCRQDVQKTQEKYEKVLEDVGKTTPQYMEGMEQVFEQCQQFEEKRLVFLKEVLLDIKRHLNLAENSSYMHVYRELEQAIRGADAQEDLRWFRSTSGPGMPMNWPQFEEWNPDLPHTTAKKEKQPKKAEGATLSNATGAVESTSQAGDRGSVSSYDRGQTYATEWSDDESGNPFGGNEANGGANPFEDDAKGVRVRALYDYDGQEQDELSFKAGDELTKLGEEDEQGWCRGRLDSGQLGLYPANYVEAI.

Ser-2 and Ser-76 each carry phosphoserine. An F-BAR domain is found at Glu-10–Asp-280. Residues Lys-23–Ile-272 adopt a coiled-coil conformation. Thr-181 is modified (phosphothreonine). The tract at residues Pro-297–Asp-380 is disordered. Basic and acidic residues predominate over residues Ala-311–Glu-321. Residues Thr-324–Thr-355 are compositionally biased toward polar residues. Phosphoserine occurs at positions 343, 345, 346, 358, and 362. Positions Ala-382–Ile-441 constitute an SH3 domain. Tyr-391 is modified (phosphotyrosine). Phosphoserine is present on residues Ser-402 and Ser-427.

This sequence belongs to the PACSIN family. As to quaternary structure, homodimer. May form heterooligomers with other PACSINs. Interacts with both COBL and DBNL. Identified in a complex composed of COBL, PACSIN1 and WASL. Interacts with EHD3. Interacts (via SH3 domain) with SYNJ1 and WASL. Interacts (via SH3 domain) with DNM1; the interaction is reduced by DNM1 phosphorylation. Interacts with DNM2 and DNM3. Interacts with MAPT. Interacts with EHD1. Interacts with TRPV4. In terms of processing, phosphorylated by casein kinase 2 (CK2) and protein kinase C (PKC). In terms of tissue distribution, highly expressed in brain. Detected in hippocampus and dorsal root ganglion neurons. Detected in rod photoreceptor terminals in the outer plexiform layer of the retina (at protein level). In CNS neurons, high levels in the pyramidal cells of the hippocampus, Purkinje cells of the cerebellum and large neurons of the cortex and brain stem.

The protein resides in the cytoplasm. The protein localises to the cell projection. Its subcellular location is the synapse. It is found in the synaptosome. It localises to the ruffle membrane. The protein resides in the membrane. The protein localises to the cytoplasmic vesicle membrane. Its subcellular location is the cytosol. It is found in the cell membrane. Binds to membranes via its F-BAR domain and mediates membrane tubulation. Plays a role in the reorganization of the microtubule cytoskeleton via its interaction with MAPT; this decreases microtubule stability and inhibits MAPT-induced microtubule polymerization. Plays a role in cellular transport processes by recruiting DNM1, DNM2 and DNM3 to membranes. Plays a role in the reorganization of the actin cytoskeleton and in neuron morphogenesis via its interaction with COBL and WASL, and by recruiting COBL to the cell cortex. Plays a role in the regulation of neurite formation, neurite branching and the regulation of neurite length. Required for normal synaptic vesicle endocytosis; this process retrieves previously released neurotransmitters to accommodate multiple cycles of neurotransmission. Required for normal excitatory and inhibitory synaptic transmission. In Mus musculus (Mouse), this protein is Protein kinase C and casein kinase substrate in neurons protein 1 (Pacsin1).